We begin with the raw amino-acid sequence, 154 residues long: Protein X (154 aa).

Positions 68–117 are mitochondrial targeting sequence; it reads PCALRFTSARRMETTVNAHQVLPKVLHKRTLGLSAMSTTDLEAYFKDCLF.

Belongs to the orthohepadnavirus protein X family. As to quaternary structure, may form homodimer. May interact with host CEBPA, CFLAR, CREB1, DDB1, E4F1, HBXIP, HSPD1/HSP60, NFKBIA, POLR2E and SMAD4. Interacts with host SMC5-SMC6 complex and induces its degradation. Interacts with host TRPC4AP; leading to prevent ubiquitination of TRPC4AP. Interacts with host PLSCR1; this interaction promotes ubiquitination and degradation of HBx and impairs HBx-mediated cell proliferation. In terms of processing, a fraction may be phosphorylated in insect cells and HepG2 cells, a human hepatoblastoma cell line. Phosphorylated in vitro by host protein kinase C or mitogen-activated protein kinase. N-acetylated in insect cells.

The protein localises to the host cytoplasm. It localises to the host nucleus. Its subcellular location is the host mitochondrion. Its function is as follows. Multifunctional protein that plays a role in silencing host antiviral defenses and promoting viral transcription. Does not seem to be essential for HBV infection. May be directly involved in development of cirrhosis and liver cancer (hepatocellular carcinoma). Most of cytosolic activities involve modulation of cytosolic calcium. The effect on apoptosis is controversial depending on the cell types in which the studies have been conducted. May induce apoptosis by localizing in mitochondria and causing loss of mitochondrial membrane potential. May also modulate apoptosis by binding host CFLAR, a key regulator of the death-inducing signaling complex (DISC). Promotes viral transcription by using the host E3 ubiquitin ligase DDB1 to target the SMC5-SMC6 complex to proteasomal degradation. This host complex would otherwise bind to viral episomal DNA, and prevents its transcription. Moderately stimulates transcription of many different viral and cellular transcription elements. Promoters and enhancers stimulated by HBx contain DNA binding sites for NF-kappa-B, AP-1, AP-2, c-EBP, ATF/CREB, or the calcium-activated factor NF-AT. The sequence is that of Protein X from Hepatitis B virus genotype C subtype adr (isolate Japan/Nishioka/1983) (HBV-C).